The chain runs to 577 residues: Arginine--tRNA ligase (577 aa).

The 'HIGH' region signature appears at 132 to 142 (ANPTGPLHVGH).

The protein belongs to the class-I aminoacyl-tRNA synthetase family. As to quaternary structure, monomer.

It localises to the cytoplasm. It catalyses the reaction tRNA(Arg) + L-arginine + ATP = L-arginyl-tRNA(Arg) + AMP + diphosphate. The polypeptide is Arginine--tRNA ligase (Janthinobacterium sp. (strain Marseille) (Minibacterium massiliensis)).